Consider the following 66-residue polypeptide: Large ribosomal subunit protein bL35 (66 aa).

The disordered stretch occupies residues 1–26 (MPKQKTHRGAAKRFKKTGSGKLKRSH).

It belongs to the bacterial ribosomal protein bL35 family.

This Bacillus anthracis protein is Large ribosomal subunit protein bL35.